Consider the following 120-residue polypeptide: Large ribosomal subunit protein bL17 (120 aa).

It belongs to the bacterial ribosomal protein bL17 family. Part of the 50S ribosomal subunit. Contacts protein L32.

The chain is Large ribosomal subunit protein bL17 from Mesomycoplasma hyopneumoniae (strain 232) (Mycoplasma hyopneumoniae).